We begin with the raw amino-acid sequence, 145 residues long: D-aminoacyl-tRNA deacylase (145 aa).

The Gly-cisPro motif, important for rejection of L-amino acids signature appears at 137–138; sequence GP.

It belongs to the DTD family. Homodimer.

The protein localises to the cytoplasm. It catalyses the reaction glycyl-tRNA(Ala) + H2O = tRNA(Ala) + glycine + H(+). It carries out the reaction a D-aminoacyl-tRNA + H2O = a tRNA + a D-alpha-amino acid + H(+). Its function is as follows. An aminoacyl-tRNA editing enzyme that deacylates mischarged D-aminoacyl-tRNAs. Also deacylates mischarged glycyl-tRNA(Ala), protecting cells against glycine mischarging by AlaRS. Acts via tRNA-based rather than protein-based catalysis; rejects L-amino acids rather than detecting D-amino acids in the active site. By recycling D-aminoacyl-tRNA to D-amino acids and free tRNA molecules, this enzyme counteracts the toxicity associated with the formation of D-aminoacyl-tRNA entities in vivo and helps enforce protein L-homochirality. The chain is D-aminoacyl-tRNA deacylase from Pseudomonas fluorescens (strain ATCC BAA-477 / NRRL B-23932 / Pf-5).